The chain runs to 152 residues: Transcriptional regulator MraZ (152 aa).

2 SpoVT-AbrB domains span residues 5–52 and 81–124; these read ATLV…PLPE and ASEC…DEQT.

It belongs to the MraZ family. As to quaternary structure, forms oligomers.

The protein resides in the cytoplasm. Its subcellular location is the nucleoid. Functionally, negatively regulates its own expression and that of the subsequent genes in the proximal part of the division and cell wall (dcw) gene cluster. Acts by binding directly to DNA. May also regulate the expression of genes outside the dcw cluster. The polypeptide is Transcriptional regulator MraZ (Pectobacterium carotovorum subsp. carotovorum (strain PC1)).